The chain runs to 569 residues: Rab GTPase-binding effector protein 2 (569 aa).

Disordered regions lie at residues 1–38, 181–267, and 388–414; these read MAAA…AELG, QRRP…ASLV, and RAEQ…PSSV. An N-acetylalanine modification is found at alanine 2. Over residues 29–38 the composition is skewed to low complexity; it reads EGANGEAELG. Residues 34–184 adopt a coiled-coil conformation; that stretch reads EAELGELSRL…ELIQEIQRRP (151 aa). A phosphoserine mark is found at serine 189, serine 193, serine 200, and serine 204. A compositionally biased stretch (low complexity) spans 245–257; that stretch reads SSSSLPRSRQGLS. Residues 292 to 391 are a coiled coil; that stretch reads WEQLQMEGRQ…EENQGLRAEQ (100 aa). Low complexity predominate over residues 393-403; it reads PSSAPQGPQQE. Positions 423–523 form a coiled coil; sequence RTRQEARAQL…LQAELETSEQ (101 aa).

The protein belongs to the rabaptin family. In terms of assembly, heterodimer with RABGEF1. The dimer binds RAB5A that has been activated by GTP-binding. Interacts with SDCCAG8; this interaction is important for ciliogenesis regulation. Interacts with RAB4; this interaction may mediate VEGFR2 cell surface expression.

It is found in the cytoplasm. It localises to the early endosome. The protein localises to the cytoskeleton. Its subcellular location is the microtubule organizing center. The protein resides in the centrosome. It is found in the cilium basal body. Plays a role in membrane trafficking and in homotypic early endosome fusion. Participates in arteriogenesis by regulating vascular endothelial growth factor receptor 2/VEGFR2 cell surface expression and endosomal trafficking. By interacting with SDCCAG8, localizes to centrosomes and plays a critical role in ciliogenesis. This Pongo abelii (Sumatran orangutan) protein is Rab GTPase-binding effector protein 2 (RABEP2).